A 90-amino-acid chain; its full sequence is Acylphosphatase (90 aa).

The 88-residue stretch at 3 to 90 (AIEVDVFGLV…FETNDFAIRG (88 aa)) folds into the Acylphosphatase-like domain. Active-site residues include Arg-18 and Asn-36.

It belongs to the acylphosphatase family.

It catalyses the reaction an acyl phosphate + H2O = a carboxylate + phosphate + H(+). The protein is Acylphosphatase (acyP) of Leuconostoc mesenteroides subsp. mesenteroides (strain ATCC 8293 / DSM 20343 / BCRC 11652 / CCM 1803 / JCM 6124 / NCDO 523 / NBRC 100496 / NCIMB 8023 / NCTC 12954 / NRRL B-1118 / 37Y).